Here is a 245-residue protein sequence, read N- to C-terminus: 4-hydroxy-tetrahydrodipicolinate reductase (245 aa).

Residues 7 to 12 (GAKGKV), 75 to 77 (GTT), and 102 to 105 (APNF) contribute to the NAD(+) site. His-132 serves as the catalytic Proton donor/acceptor. His-133 is a binding site for (S)-2,3,4,5-tetrahydrodipicolinate. Lys-136 serves as the catalytic Proton donor. Residue 142–143 (GT) participates in (S)-2,3,4,5-tetrahydrodipicolinate binding.

It belongs to the DapB family.

The protein localises to the cytoplasm. The enzyme catalyses (S)-2,3,4,5-tetrahydrodipicolinate + NAD(+) + H2O = (2S,4S)-4-hydroxy-2,3,4,5-tetrahydrodipicolinate + NADH + H(+). It carries out the reaction (S)-2,3,4,5-tetrahydrodipicolinate + NADP(+) + H2O = (2S,4S)-4-hydroxy-2,3,4,5-tetrahydrodipicolinate + NADPH + H(+). The protein operates within amino-acid biosynthesis; L-lysine biosynthesis via DAP pathway; (S)-tetrahydrodipicolinate from L-aspartate: step 4/4. Catalyzes the conversion of 4-hydroxy-tetrahydrodipicolinate (HTPA) to tetrahydrodipicolinate. The polypeptide is 4-hydroxy-tetrahydrodipicolinate reductase (Mycolicibacterium gilvum (strain PYR-GCK) (Mycobacterium gilvum (strain PYR-GCK))).